The chain runs to 342 residues: MADLKSTFLDVYSVLKSDLLQDPSFEFTHESRQWLERMLDYNVRGGKLNRGLSVVDSYKLLKQGQDLTEKETFLSCALGWCIEWLQAYFLVLDDIMDNSVTRRGQPCWFRKPKVGMIAINDGILLRNHIHRILKKHFREMPYYVDLVDLFNEVEFQTACGQMIDLITTFDGEKDLSKYSLQIHRRIVEYKTAYYSFYLPVACALLMAGENLENHTDVKTVLVDMGIYFQVQDDYLDCFADPETLGKIGTDIEDFKCSWLVVKALERCSEEQTKILYENYGKAEPSNVAKVKALYKELDLEGAFMEYEKESYEKLTKLIEAHQSKAIQAVLKSFLAKIYKRQK.

3 residues coordinate isopentenyl diphosphate: lysine 47, arginine 50, and glutamine 86. Mg(2+) contacts are provided by aspartate 93 and aspartate 97. Arginine 102 provides a ligand contact to dimethylallyl diphosphate. Arginine 103 provides a ligand contact to isopentenyl diphosphate. Dimethylallyl diphosphate contacts are provided by lysine 190, threonine 191, glutamine 229, lysine 246, and lysine 255.

This sequence belongs to the FPP/GGPP synthase family. The cofactor is Mg(2+).

It localises to the cytoplasm. The catalysed reaction is isopentenyl diphosphate + dimethylallyl diphosphate = (2E)-geranyl diphosphate + diphosphate. The enzyme catalyses isopentenyl diphosphate + (2E)-geranyl diphosphate = (2E,6E)-farnesyl diphosphate + diphosphate. It participates in isoprenoid biosynthesis; farnesyl diphosphate biosynthesis; farnesyl diphosphate from geranyl diphosphate and isopentenyl diphosphate: step 1/1. The protein operates within isoprenoid biosynthesis; geranyl diphosphate biosynthesis; geranyl diphosphate from dimethylallyl diphosphate and isopentenyl diphosphate: step 1/1. In terms of biological role, catalyzes the sequential condensation of isopentenyl pyrophosphate with the allylic pyrophosphates, dimethylallyl pyrophosphate, and then with the resultant geranylpyrophosphate to the ultimate product farnesyl pyrophosphate. The polypeptide is Farnesyl pyrophosphate synthase 2 (FPS2) (Arabidopsis thaliana (Mouse-ear cress)).